A 969-amino-acid polypeptide reads, in one-letter code: Chromosome transmission fidelity protein 18 homolog (969 aa).

A disordered region spans residues 30 to 97; sequence EGTRDQAPPG…APSSPMVKRP (68 aa). Phosphothreonine is present on Thr-51. Ser-221 bears the Phosphoserine mark. 2 disordered regions span residues 250–269 and 318–340; these read SEGEEAVLEGPPAEEPAPGQ and RKPRPGVETTRVGKEATAPGKWK. Over residues 257–268 the composition is skewed to low complexity; it reads LEGPPAEEPAPG. Position 369 to 376 (369 to 376) interacts with ATP; sequence GPPGLGKT. The disordered stretch occupies residues 856–889; sequence ARSGPQVDQGSSGPASLWTDSGEKGTRQPAPRNH. A compositionally biased stretch (basic and acidic residues) spans 876–889; that stretch reads SGEKGTRQPAPRNH.

Belongs to the activator 1 small subunits family. CTF18 subfamily. In terms of assembly, component of the CTF18-RFC complex, which consists of CTF18, CTF8, DCC1, RFC2, RFC3, RFC4 and RFC5. During assembly of the CTF18-RFC complex, CTF18 may first assemble into a subcomplex with RFC2, RFC3, RFC4 and RFC5. CTF18 then interacts directly with CTF8, which in turn interacts with DCC1. The CTF18-RFC complex associates with PCNA and with DNA polymerase POLH. The CTF18-RFC complex does not interact with the Rad9/Rad1/Hus1 complex. CTF18 interacts with SMC1A and RAD21. Interacts with DDX11.

The protein resides in the nucleus. Chromosome cohesion factor involved in sister chromatid cohesion and fidelity of chromosome transmission. Component of one of the cell nuclear antigen loader complexes, CTF18-replication factor C (CTF18-RFC), which consists of CTF18, CTF8, DCC1, RFC2, RFC3, RFC4 and RFC5. The CTF18-RFC complex binds to single-stranded and primed DNAs and has weak ATPase activity that is stimulated by the presence of primed DNA, replication protein A (RPA) and by proliferating cell nuclear antigen (PCNA). The CTF18-RFC complex catalyzes the ATP-dependent loading of PCNA onto primed and gapped DNA. Interacts with and stimulates DNA polymerase POLH. During DNA repair synthesis, involved in loading DNA polymerase POLE at the sites of local damage. The polypeptide is Chromosome transmission fidelity protein 18 homolog (Chtf18) (Mus musculus (Mouse)).